The sequence spans 135 residues: Small ribosomal subunit protein uS11 (135 aa).

Belongs to the universal ribosomal protein uS11 family. As to quaternary structure, part of the 30S ribosomal subunit. Interacts with proteins S7 and S18. Binds to IF-3.

Functionally, located on the platform of the 30S subunit, it bridges several disparate RNA helices of the 16S rRNA. Forms part of the Shine-Dalgarno cleft in the 70S ribosome. The chain is Small ribosomal subunit protein uS11 from Polynucleobacter asymbioticus (strain DSM 18221 / CIP 109841 / QLW-P1DMWA-1) (Polynucleobacter necessarius subsp. asymbioticus).